Consider the following 137-residue polypeptide: Nucleoside diphosphate kinase (137 aa).

6 residues coordinate ATP: Lys-9, Phe-57, Arg-85, Thr-91, Arg-102, and Asn-112. His-115 serves as the catalytic Pros-phosphohistidine intermediate.

The protein belongs to the NDK family. Homotetramer. Mg(2+) is required as a cofactor.

Its subcellular location is the cytoplasm. The catalysed reaction is a 2'-deoxyribonucleoside 5'-diphosphate + ATP = a 2'-deoxyribonucleoside 5'-triphosphate + ADP. It carries out the reaction a ribonucleoside 5'-diphosphate + ATP = a ribonucleoside 5'-triphosphate + ADP. In terms of biological role, major role in the synthesis of nucleoside triphosphates other than ATP. The ATP gamma phosphate is transferred to the NDP beta phosphate via a ping-pong mechanism, using a phosphorylated active-site intermediate. The polypeptide is Nucleoside diphosphate kinase (Sulfurovum sp. (strain NBC37-1)).